A 477-amino-acid chain; its full sequence is tRNA-2-methylthio-N(6)-dimethylallyladenosine synthase (477 aa).

The MTTase N-terminal domain maps to 3-120 (KKLYIKTWGC…LPEMINELKG (118 aa)). [4Fe-4S] cluster is bound by residues cysteine 12, cysteine 49, cysteine 83, cysteine 157, cysteine 161, and cysteine 164. Residues 143–375 (RAEGPTAFVS…QQRITQQALR (233 aa)) enclose the Radical SAM core domain. A TRAM domain is found at 378–441 (RHMVGTEQRI…TNSLRGEVVR (64 aa)).

It belongs to the methylthiotransferase family. MiaB subfamily. In terms of assembly, monomer. [4Fe-4S] cluster serves as cofactor.

Its subcellular location is the cytoplasm. It catalyses the reaction N(6)-dimethylallyladenosine(37) in tRNA + (sulfur carrier)-SH + AH2 + 2 S-adenosyl-L-methionine = 2-methylsulfanyl-N(6)-dimethylallyladenosine(37) in tRNA + (sulfur carrier)-H + 5'-deoxyadenosine + L-methionine + A + S-adenosyl-L-homocysteine + 2 H(+). Its function is as follows. Catalyzes the methylthiolation of N6-(dimethylallyl)adenosine (i(6)A), leading to the formation of 2-methylthio-N6-(dimethylallyl)adenosine (ms(2)i(6)A) at position 37 in tRNAs that read codons beginning with uridine. This is tRNA-2-methylthio-N(6)-dimethylallyladenosine synthase from Alteromonas mediterranea (strain DSM 17117 / CIP 110805 / LMG 28347 / Deep ecotype).